The sequence spans 258 residues: Phosphate import ATP-binding protein PstB (258 aa).

Residues 5–247 enclose the ABC transporter domain; it reads IETKDLDIYY…ERIFSNPKEK (243 aa). 37–44 contacts ATP; sequence GPSGCGKS.

Belongs to the ABC transporter superfamily. Phosphate importer (TC 3.A.1.7) family. As to quaternary structure, the complex is composed of two ATP-binding proteins (PstB), two transmembrane proteins (PstC and PstA) and a solute-binding protein (PstS).

It is found in the cell membrane. The catalysed reaction is phosphate(out) + ATP + H2O = ADP + 2 phosphate(in) + H(+). In terms of biological role, part of the ABC transporter complex PstSACB involved in phosphate import. Responsible for energy coupling to the transport system. This chain is Phosphate import ATP-binding protein PstB, found in Cutibacterium acnes (strain DSM 16379 / KPA171202) (Propionibacterium acnes).